The sequence spans 483 residues: Regulatory protein ViaA (483 aa).

The protein belongs to the ViaA family. In terms of assembly, homodimer. Interacts with RavA.

The protein resides in the cytoplasm. In terms of biological role, component of the RavA-ViaA chaperone complex, which may act on the membrane to optimize the function of some of the respiratory chains. ViaA stimulates the ATPase activity of RavA. This chain is Regulatory protein ViaA, found in Enterobacter sp. (strain 638).